Reading from the N-terminus, the 91-residue chain is MKVSAAALCVILTTAALCVPASASPYASDTTPCCFAYISRALPRTHIKEYFYTSSKCSNLAVVFVTRKNRQVCANPEKKWVREYINSLEMS.

Positions 1 to 23 (MKVSAAALCVILTTAALCVPASA) are cleaved as a signal peptide. Cystine bridges form between cysteine 33-cysteine 57 and cysteine 34-cysteine 73.

Belongs to the intercrine beta (chemokine CC) family.

Its subcellular location is the secreted. In terms of biological role, chemoattractant for blood monocytes, memory T-helper cells and eosinophils. Causes the release of histamine from basophils and activates eosinophils. May activate several chemokine receptors including CCR1, CCR3, CCR4 and CCR5. May also be an agonist of the G protein-coupled receptor GPR75. Together with GPR75, may play a role in neuron survival through activation of a downstream signaling pathway involving the PI3, Akt and MAP kinases. By activating GPR75 may also play a role in insulin secretion by islet cells. The sequence is that of C-C motif chemokine 5 (CCL5) from Cavia porcellus (Guinea pig).